Reading from the N-terminus, the 261-residue chain is Uridine-cytidine kinase 2 (261 aa).

Positions 1–16 (MAGDSEQTLQNHQQPN) are enriched in polar residues. Residues 1 to 24 (MAGDSEQTLQNHQQPNGGEPFLIG) form a disordered region. At Ala-2 the chain carries N-acetylalanine. 27 to 35 (GGTASGKSS) is an ATP binding site. Substrate-binding residues include Asp-84, Tyr-112, His-117, Arg-166, Arg-176, and Gln-184. An ATP-binding site is contributed by Asp-213. A disordered region spans residues 240–261 (GYLNGYTPSRKRQASESSSRPH). The residue at position 254 (Ser-254) is a Phosphoserine.

Belongs to the uridine kinase family. Homotetramer.

The enzyme catalyses uridine + ATP = UMP + ADP + H(+). The catalysed reaction is cytidine + ATP = CMP + ADP + H(+). Its pathway is pyrimidine metabolism; CTP biosynthesis via salvage pathway; CTP from cytidine: step 1/3. It functions in the pathway pyrimidine metabolism; UMP biosynthesis via salvage pathway; UMP from uridine: step 1/1. Phosphorylates uridine and cytidine to uridine monophosphate and cytidine monophosphate. Does not phosphorylate deoxyribonucleosides or purine ribonucleosides. Can use ATP or GTP as a phosphate donor. The sequence is that of Uridine-cytidine kinase 2 (Uck2) from Mus musculus (Mouse).